A 429-amino-acid polypeptide reads, in one-letter code: E3 ubiquitin-protein ligase ZNRF4 (429 aa).

The first 27 residues, 1-27 (MPLCRPEHLMPRASRVPVAASLPLSHA), serve as a signal peptide directing secretion. At 28–250 (VIPTQLPSRP…PPCHDLGCHP (223 aa)) the chain is on the lumenal side. The tract at residues 30-67 (PTQLPSRPGHRPPGRPRRCPKASCLPPPVGPSSTQTAK) is disordered. A compositionally biased stretch (basic residues) spans 37-49 (PGHRPPGRPRRCP). Residues Asn107, Asn152, and Asn229 are each glycosylated (N-linked (GlcNAc...) asparagine). Positions 151–223 (GNRSLGAIVL…VSEAASQDLR (73 aa)) constitute a PA domain. A helical transmembrane segment spans residues 251-271 (VLTVSWVLGCTLALVVSAFFV). At 272-429 (LNHLWLWAQA…SSAPPEAPGQ (158 aa)) the chain is on the cytoplasmic side. The RING-type; atypical zinc-finger motif lies at 309–352 (CAICLDEYEEGDQLKILPCSHTYHCKCIDPWFSQAPRRSCPVCK).

In terms of assembly, interacts with CANX.

The protein resides in the endoplasmic reticulum membrane. The enzyme catalyses S-ubiquitinyl-[E2 ubiquitin-conjugating enzyme]-L-cysteine + [acceptor protein]-L-lysine = [E2 ubiquitin-conjugating enzyme]-L-cysteine + N(6)-ubiquitinyl-[acceptor protein]-L-lysine.. It functions in the pathway protein modification; protein ubiquitination. Functionally, E3 ubiquitin-protein ligase that acts as a negative regulator of NOD2 signaling by mediating ubiquitination and degradation of RIPK2. Also catalyzes ubiquitination and proteasomal degradation of CANX within the endoplasmic reticulum. Could have a role in spermatogenesis. The sequence is that of E3 ubiquitin-protein ligase ZNRF4 from Homo sapiens (Human).